The sequence spans 141 residues: uncharacterized protein (141 aa).

This is an uncharacterized protein from Caenorhabditis elegans.